The primary structure comprises 75 residues: UPF0352 protein ASA_2693 (75 aa).

The protein belongs to the UPF0352 family.

The polypeptide is UPF0352 protein ASA_2693 (Aeromonas salmonicida (strain A449)).